Here is a 361-residue protein sequence, read N- to C-terminus: Phospho-N-acetylmuramoyl-pentapeptide-transferase (361 aa).

10 helical membrane passes run 27–47 (ILAS…MIRW), 70–90 (GTPT…CLLW), 97–117 (SLWL…VDDY), 134–154 (YFWQ…NASL), 167–187 (TVTW…IVGS), 199–219 (GLAI…AYAS), 236–256 (TGEL…FLWY), 263–283 (VFMG…VAVV), 288–308 (LVLL…ILQV), and 338–358 (KVIV…LATL).

It belongs to the glycosyltransferase 4 family. MraY subfamily. The cofactor is Mg(2+).

The protein localises to the cell inner membrane. It catalyses the reaction UDP-N-acetyl-alpha-D-muramoyl-L-alanyl-gamma-D-glutamyl-meso-2,6-diaminopimeloyl-D-alanyl-D-alanine + di-trans,octa-cis-undecaprenyl phosphate = di-trans,octa-cis-undecaprenyl diphospho-N-acetyl-alpha-D-muramoyl-L-alanyl-D-glutamyl-meso-2,6-diaminopimeloyl-D-alanyl-D-alanine + UMP. It functions in the pathway cell wall biogenesis; peptidoglycan biosynthesis. Its function is as follows. Catalyzes the initial step of the lipid cycle reactions in the biosynthesis of the cell wall peptidoglycan: transfers peptidoglycan precursor phospho-MurNAc-pentapeptide from UDP-MurNAc-pentapeptide onto the lipid carrier undecaprenyl phosphate, yielding undecaprenyl-pyrophosphoryl-MurNAc-pentapeptide, known as lipid I. In Legionella pneumophila (strain Lens), this protein is Phospho-N-acetylmuramoyl-pentapeptide-transferase.